A 472-amino-acid polypeptide reads, in one-letter code: Kynureninase 2 (472 aa).

Pyridoxal 5'-phosphate is bound by residues L133, T134, 162–165 (FPSD), D247, H250, and Y272. K273 carries the post-translational modification N6-(pyridoxal phosphate)lysine. Pyridoxal 5'-phosphate contacts are provided by W314 and N342.

It belongs to the kynureninase family. As to quaternary structure, homodimer. Pyridoxal 5'-phosphate is required as a cofactor.

The protein resides in the cytoplasm. The catalysed reaction is L-kynurenine + H2O = anthranilate + L-alanine + H(+). It catalyses the reaction 3-hydroxy-L-kynurenine + H2O = 3-hydroxyanthranilate + L-alanine + H(+). Its pathway is amino-acid degradation; L-kynurenine degradation; L-alanine and anthranilate from L-kynurenine: step 1/1. It participates in cofactor biosynthesis; NAD(+) biosynthesis; quinolinate from L-kynurenine: step 2/3. Functionally, catalyzes the cleavage of L-kynurenine (L-Kyn) and L-3-hydroxykynurenine (L-3OHKyn) into anthranilic acid (AA) and 3-hydroxyanthranilic acid (3-OHAA), respectively. In Neurospora crassa (strain ATCC 24698 / 74-OR23-1A / CBS 708.71 / DSM 1257 / FGSC 987), this protein is Kynureninase 2 (kyn-2).